The sequence spans 64 residues: Large ribosomal subunit protein bL33c (64 aa).

Belongs to the bacterial ribosomal protein bL33 family.

Its subcellular location is the plastid. It localises to the cyanelle. This Cyanophora paradoxa protein is Large ribosomal subunit protein bL33c (rpl33).